A 419-amino-acid polypeptide reads, in one-letter code: DNA ligase (419 aa).

Residues 1–120 (MLNQFPGQLS…ARQKRGAHTN (120 aa)) are NTD. The interval 121–317 (RGMIPPMLVK…NYHSPHLAKL (197 aa)) is AD domain. The N6-AMP-lysine intermediate role is filled by lysine 151. The interval 318–419 (KPLLDAEFIL…REPINVLEII (102 aa)) is OB domain.

The protein belongs to the ATP-dependent DNA ligase family.

It is found in the virion. It carries out the reaction ATP + (deoxyribonucleotide)n-3'-hydroxyl + 5'-phospho-(deoxyribonucleotide)m = (deoxyribonucleotide)n+m + AMP + diphosphate.. Its function is as follows. Very low-fidelity DNA ligase that seals nicks in double-stranded DNA during DNA repair. Together with the viral repair DNA polymerase X, fills the single nucleotide gaps generated by the AP endonuclease. It is not essential for viral replication and recombination. Displays a very low adenylation activity towards DNA with 3'-dideoxy- or 3'-amino-terminated nicks compared to regular nick DNA. This is DNA ligase from Ornithodoros (relapsing fever ticks).